Here is a 748-residue protein sequence, read N- to C-terminus: MTIRSPETEVKIVVEKDPVKTSFEKWAQPGHFSRTLAKGPSTTTWIWNLHADAHDFDSHTSDLEEISRKVFSAHFGQIAVILIWLSGMYFHGARFSNYEAWLSDPTHIKPSAQVVWPIVGQEILNGDVGGGFQGVQITSGFFQIWRASGITSELQLYSTAIGGLVLATLTLIGGWYHYHKAAPTLAWFQDVESMLNHHLAGLIGLGSLSWAGHQIHVSLPINQLLDAGVDPKEIPLPHEFILNRELLAQLYPSFSKGLTPFFTLNWSEYSDFLTFRGGLNPVTGGLWLSDTAHHHLAIAVLFIIAGHQYRTNWGIGHSLREILEAHKGPFTGEGHKGLYEILTTSWHAQLALNLALFGSLTIIVAHHMYAMPPYPYLATDYGTQLSLFTHHMWIGGFLVTGAAAHAAIFLVRDYDPTTQYNNLLDRVLRHRDAIISHLNWVCIFLGFHSFGLYIHNDTMSALGRPQDMFSDTAIQLQPVFAQWIQNTHTLAPTLTAPNAASSTSITWGGNLVAVGGKVALLPIPLGTADFLVHHIHAFTIHVTVLILLKGVLFARSSRLIPDKANLGFRFPCDGPGRGGTCQVSAWDHVFLGLFWMYNSISVVIFHFSWKMQSDVWGTVTSNGVSNITGGNFAQSANTINGWLRDFLWAQASQVIQSYGSALSAYGLIFLGAHFVWAFSLMFLFSGRGYWQELIESIVWAHNKLKVAPAIQPRALSIIQGRAVGVAHYLLGGIATTWAFFLARIISVG.

8 helical membrane passes run 70-93, 156-179, 195-219, 291-309, 346-369, 385-411, 433-455, and 530-548; these read VFSAHFGQIAVILIWLSGMYFHGA, LYSTAIGGLVLATLTLIGGWYHYH, LNHHLAGLIGLGSLSWAGHQIHVSL, TAHHHLAIAVLFIIAGHQY, WHAQLALNLALFGSLTIIVAHHMY, LSLFTHHMWIGGFLVTGAAAHAAIFLV, AIISHLNWVCIFLGFHSFGLYIH, and FLVHHIHAFTIHVTVLILL. The [4Fe-4S] cluster site is built by C572 and C581. 2 helical membrane passes run 588–609 and 662–684; these read HVFLGLFWMYNSISVVIFHFSW and LSAYGLIFLGAHFVWAFSLMFLF. Chlorophyll a' is bound at residue H673. 2 residues coordinate chlorophyll a: M681 and Y689. W690 provides a ligand contact to phylloquinone. A helical membrane pass occupies residues 722-742; it reads AVGVAHYLLGGIATTWAFFLA.

Belongs to the PsaA/PsaB family. In terms of assembly, the PsaA/B heterodimer binds the P700 chlorophyll special pair and subsequent electron acceptors. PSI consists of a core antenna complex that captures photons, and an electron transfer chain that converts photonic excitation into a charge separation. The eukaryotic PSI reaction center is composed of at least 11 subunits. The cofactor is P700 is a chlorophyll a/chlorophyll a' dimer, A0 is one or more chlorophyll a, A1 is one or both phylloquinones and FX is a shared 4Fe-4S iron-sulfur center..

The protein resides in the plastid. It localises to the chloroplast thylakoid membrane. The enzyme catalyses reduced [plastocyanin] + hnu + oxidized [2Fe-2S]-[ferredoxin] = oxidized [plastocyanin] + reduced [2Fe-2S]-[ferredoxin]. In terms of biological role, psaA and PsaB bind P700, the primary electron donor of photosystem I (PSI), as well as the electron acceptors A0, A1 and FX. PSI is a plastocyanin-ferredoxin oxidoreductase, converting photonic excitation into a charge separation, which transfers an electron from the donor P700 chlorophyll pair to the spectroscopically characterized acceptors A0, A1, FX, FA and FB in turn. Oxidized P700 is reduced on the lumenal side of the thylakoid membrane by plastocyanin. The polypeptide is Photosystem I P700 chlorophyll a apoprotein A1 (Chaetosphaeridium globosum (Charophycean green alga)).